The chain runs to 77 residues: NAD(P)H-quinone oxidoreductase subunit L (77 aa).

Transmembrane regions (helical) follow at residues 12-32 (LIAYIGIISTYLLVIPLLLFY) and 47-67 (LGIYGLVFLFFPGLILFSPFL).

Belongs to the complex I NdhL subunit family. In terms of assembly, NDH-1 can be composed of about 15 different subunits; different subcomplexes with different compositions have been identified which probably have different functions.

The protein localises to the cellular thylakoid membrane. It carries out the reaction a plastoquinone + NADH + (n+1) H(+)(in) = a plastoquinol + NAD(+) + n H(+)(out). The catalysed reaction is a plastoquinone + NADPH + (n+1) H(+)(in) = a plastoquinol + NADP(+) + n H(+)(out). In terms of biological role, NDH-1 shuttles electrons from an unknown electron donor, via FMN and iron-sulfur (Fe-S) centers, to quinones in the respiratory and/or the photosynthetic chain. The immediate electron acceptor for the enzyme in this species is believed to be plastoquinone. Couples the redox reaction to proton translocation, and thus conserves the redox energy in a proton gradient. Cyanobacterial NDH-1 also plays a role in inorganic carbon-concentration. In Prochlorococcus marinus (strain MIT 9301), this protein is NAD(P)H-quinone oxidoreductase subunit L.